The primary structure comprises 733 residues: Fibronectin type III domain-containing protein 7 (733 aa).

Residues 1–25 (MAGGRETCLPLIGFILICLKMVASA) form the signal peptide. 8 consecutive Fibronectin type-III domains span residues 28–115 (APEI…TVLA), 116–202 (APIL…TSPR), 203–288 (APAN…TVAC), 289–373 (APGR…TAPC), 374–459 (CPSD…TAPC), 460–544 (SPEI…TVPC), 545–632 (CPTG…CCPL), and 631–715 (PLGV…YSVT). The N-linked (GlcNAc...) asparagine glycan is linked to asparagine 230. N-linked (GlcNAc...) asparagine glycosylation occurs at asparagine 433.

The protein localises to the secreted. This is Fibronectin type III domain-containing protein 7 (FNDC7) from Homo sapiens (Human).